A 495-amino-acid chain; its full sequence is Chromosomal replication initiator protein DnaA (495 aa).

The segment at 1–83 is domain I, interacts with DnaA modulators; the sequence is MSVALWQQCL…KVQLTVGSRR (83 aa). The segment at 83–158 is domain II; that stretch reads RNVAMSSPRD…QVEGSLKHQS (76 aa). Residues 86-127 form a disordered region; sequence AMSSPRDLGAPVSATTMNASRPTEAPAVHAAPRAKGDYADEQ. The domain III, AAA+ region stretch occupies residues 159–375; sequence GLNPNFTFET…GALKKVIADS (217 aa). Positions 203, 205, 206, and 207 each coordinate ATP. Residues 376 to 495 are domain IV, binds dsDNA; the sequence is HFMGKPITQD…YKNLLRLLTS (120 aa).

Belongs to the DnaA family. In terms of assembly, oligomerizes as a right-handed, spiral filament on DNA at oriC.

Its subcellular location is the cytoplasm. Its function is as follows. Plays an essential role in the initiation and regulation of chromosomal replication. ATP-DnaA binds to the origin of replication (oriC) to initiate formation of the DNA replication initiation complex once per cell cycle. Binds the DnaA box (a 9 base pair repeat at the origin) and separates the double-stranded (ds)DNA. Forms a right-handed helical filament on oriC DNA; dsDNA binds to the exterior of the filament while single-stranded (ss)DNA is stabiized in the filament's interior. The ATP-DnaA-oriC complex binds and stabilizes one strand of the AT-rich DNA unwinding element (DUE), permitting loading of DNA polymerase. After initiation quickly degrades to an ADP-DnaA complex that is not apt for DNA replication. Binds acidic phospholipids. The polypeptide is Chromosomal replication initiator protein DnaA (Chromohalobacter salexigens (strain ATCC BAA-138 / DSM 3043 / CIP 106854 / NCIMB 13768 / 1H11)).